An 893-amino-acid chain; its full sequence is Alanine--tRNA ligase (893 aa).

Zn(2+)-binding residues include H574, H578, C678, and H682.

This sequence belongs to the class-II aminoacyl-tRNA synthetase family. It depends on Zn(2+) as a cofactor.

The protein resides in the cytoplasm. The catalysed reaction is tRNA(Ala) + L-alanine + ATP = L-alanyl-tRNA(Ala) + AMP + diphosphate. Catalyzes the attachment of alanine to tRNA(Ala) in a two-step reaction: alanine is first activated by ATP to form Ala-AMP and then transferred to the acceptor end of tRNA(Ala). Also edits incorrectly charged Ser-tRNA(Ala) and Gly-tRNA(Ala) via its editing domain. This Bifidobacterium longum (strain NCC 2705) protein is Alanine--tRNA ligase.